A 49-amino-acid chain; its full sequence is Large ribosomal subunit protein bL33 (49 aa).

This sequence belongs to the bacterial ribosomal protein bL33 family.

The polypeptide is Large ribosomal subunit protein bL33 (Alkaliphilus metalliredigens (strain QYMF)).